Reading from the N-terminus, the 446-residue chain is Lysine histidine transporter 1 (446 aa).

Over 1-37 (MVAQAPHDDHQDDEKLAAARQKEIEDWLPITSSRNAK) the chain is Cytoplasmic. A helical membrane pass occupies residues 38 to 58 (WWYSAFHNVTAMVGAGVLGLP). The Extracellular portion of the chain corresponds to 59-63 (YAMSQ). The helical transmembrane segment at 64-84 (LGWGPGIAVLVLSWVITLYTL) threads the bilayer. Residues 85-115 (WQMVEMHEMVPGKRFDRYHELGQHAFGEKLG) are Cytoplasmic-facing. The helical transmembrane segment at 116-136 (LYIVVPQQLIVEIGVCIVYMV) threads the bilayer. Residues 137–157 (TGGKSLKKFHELVCDDCKPIK) are Extracellular-facing. The chain crosses the membrane as a helical span at residues 158 to 178 (LTYFIMIFASVHFVLSHLPNF). The Cytoplasmic segment spans residues 179–180 (NS). Residues 181–201 (ISGVSLAAAVMSLSYSTIAWA) form a helical membrane-spanning segment. Topologically, residues 202-227 (SSASKGVQEDVQYGYKAKTTAGTVFN) are extracellular. Residues 228-248 (FFSGLGDVAFAYAGHNVVLEI) form a helical membrane-spanning segment. Over 249 to 268 (QATIPSTPEKPSKGPMWRGV) the chain is Cytoplasmic. Residues 269–289 (IVAYIVVALCYFPVALVGYYI) form a helical membrane-spanning segment. The Extracellular portion of the chain corresponds to 290-305 (FGNGVEDNILMSLKKP). A helical transmembrane segment spans residues 306 to 326 (AWLIATANIFVVIHVIGSYQI). Over 327-352 (YAMPVFDMMETLLVKKLNFRPTTTLR) the chain is Cytoplasmic. A helical transmembrane segment spans residues 353–375 (FFVRNFYVAATMFVGMTFPFFGG). Residues 376–378 (LLA) lie on the Extracellular side of the membrane. A helical membrane pass occupies residues 379 to 401 (FFGGFAFAPTTYFLPCVIWLAIY). At 402–409 (KPKKYSLS) the chain is on the cytoplasmic side. The helical transmembrane segment at 410–430 (WWANWVCIVFGLFLMVLSPIG) threads the bilayer. Residues 431-446 (GLRTIVIQAKGYKFYS) lie on the Extracellular side of the membrane.

It belongs to the amino acid/polyamine transporter 2 family. Amino acid/auxin permease (AAAP) (TC 2.A.18.2) subfamily. Expressed in roots, stems, flowers, leaves, siliques and pollen. Found in the tips of roots and in the rhizodermis of emerging roots and in lateral roots. Higher expression in older leaves as compared to joung leaves. Detected first at the hydathodes, then in the epidermis and finally in matures leaves in all mesophyll cells. Not detected in vascular bundles or in seeds.

Its subcellular location is the cell membrane. Inhibited by carbonlycyanide m-chlorophenylhydrazone (CCCP) and DEPC. Amino acid-proton symporter. Transporter with a broad specificity for histidine, lysine, glutamic acid, alanine, serine, proline and glycine. Involved in both apoplastic transport of amino acids in leaves and their uptake by roots. The sequence is that of Lysine histidine transporter 1 (LHT1) from Arabidopsis thaliana (Mouse-ear cress).